A 376-amino-acid chain; its full sequence is Phosphoserine aminotransferase (376 aa).

Arg-54 contacts L-glutamate. Residues 88–89 (AT), Trp-115, Thr-165, Asp-186, and Gln-209 each bind pyridoxal 5'-phosphate. Residue Lys-210 is modified to N6-(pyridoxal phosphate)lysine. 251 to 252 (NT) serves as a coordination point for pyridoxal 5'-phosphate.

This sequence belongs to the class-V pyridoxal-phosphate-dependent aminotransferase family. SerC subfamily. Homodimer. The cofactor is pyridoxal 5'-phosphate.

The protein resides in the cytoplasm. The enzyme catalyses O-phospho-L-serine + 2-oxoglutarate = 3-phosphooxypyruvate + L-glutamate. It catalyses the reaction 4-(phosphooxy)-L-threonine + 2-oxoglutarate = (R)-3-hydroxy-2-oxo-4-phosphooxybutanoate + L-glutamate. It functions in the pathway amino-acid biosynthesis; L-serine biosynthesis; L-serine from 3-phospho-D-glycerate: step 2/3. Its pathway is cofactor biosynthesis; pyridoxine 5'-phosphate biosynthesis; pyridoxine 5'-phosphate from D-erythrose 4-phosphate: step 3/5. Functionally, catalyzes the reversible conversion of 3-phosphohydroxypyruvate to phosphoserine and of 3-hydroxy-2-oxo-4-phosphonooxybutanoate to phosphohydroxythreonine. This is Phosphoserine aminotransferase from Rhodopirellula baltica (strain DSM 10527 / NCIMB 13988 / SH1).